The sequence spans 638 residues: MIYPDRFDVIVIGGGHAGTEACLAAARMGCKTLLLSHNIETLGQMSCNPAIGGIGKSHLVKEIDALGGAMALATDKGGIQFRVLNARKGPAVRATRAQADRILYKAAIRHTLENQPNLWIFQQAVDDLIVEQDQVRGVVTQMGLKFMADQVVLTAGTFLGGLIHIGLENYSGGRAGDPPSIALSRRLRELPLRVDRLKTGTPPRIDARTVNFDLLEKQWGDEPRPVMSVRGNRAMQPPQICCYITHTNERTHEVIRNNLDRSPMYSGVIEGIGPRYCPSIEDKIHRFADKDSHQVFIEPEGLTTHELYPNGISTSLPFDVQLQIVRSMRGFENAHILRPGYAIEYDFFNPQDLQHSLETRVIGGLFFAGQINGTTGYEEAGAQGLLAGINAALRAQGKAAWCPTRDQAYMGVLVDDLITLGTKEPYRMFTSRAEYRLLLREDNADLRLTEKGRELGLIGDEQWQLFCEKREQIALEQQRLKSTWIQAGSAEAEQIEAKINVRLAREYSLMDLLKRPELNYADVASLKGEPLAGEAAAEQVEIEAKYAGYIDRQQDDINRLRAYENTLIPEDLDYAQVEGLSNEVKQKLSAARPQTLARAARISGITPAAISLVLVYLKKRGLLKRLKDDHPVPEQQAG.

Residues 13–18, valine 125, and serine 180 contribute to the FAD site; that span reads GGGHAG. Residue 273–287 coordinates NAD(+); that stretch reads GPRYCPSIEDKIHRF. FAD is bound at residue glutamine 370.

It belongs to the MnmG family. Homodimer. Heterotetramer of two MnmE and two MnmG subunits. Requires FAD as cofactor.

The protein resides in the cytoplasm. NAD-binding protein involved in the addition of a carboxymethylaminomethyl (cmnm) group at the wobble position (U34) of certain tRNAs, forming tRNA-cmnm(5)s(2)U34. In Cellvibrio japonicus (strain Ueda107) (Pseudomonas fluorescens subsp. cellulosa), this protein is tRNA uridine 5-carboxymethylaminomethyl modification enzyme MnmG.